A 410-amino-acid polypeptide reads, in one-letter code: Transcription factor Dp-1 (410 aa).

Lys3 carries the N6-acetyllysine modification. Position 23 is a phosphoserine (Ser23). Polar residues predominate over residues 73–100 (SNTLVVGSPHTPSTHFASQNQPSDSSPW). The disordered stretch occupies residues 73 to 116 (SNTLVVGSPHTPSTHFASQNQPSDSSPWSAGKRNRKGEKNGKGL). Basic residues predominate over residues 104–116 (KRNRKGEKNGKGL). The interval 105 to 127 (RNRKGEKNGKGLRHFSMKVCEKV) is interaction with CEBPA. Residues 113–195 (GKGLRHFSMK…KKEIKWIGLP (83 aa)) mediate DNA binding. The DEF box signature appears at 161–195 (DQKNIRRRVYDALNVLMAMNIISKEKKEIKWIGLP). Residues 204–277 (NLEVERQRRL…KKTVIDCSIS (74 aa)) are dimerization. Residues 211-327 (RRLERIKQKQ…DLKMARSLVP (117 aa)) are enhances binding of RB protein to E2F. Residues 214-246 (ERIKQKQSQLQELILQQIAFKNLVQRNRHAEQQ) form a DCB1 region. Positions 259–315 (LPFIIVNTSKKTVIDCSISNDKFEYLFNFDNTFEIHDDIEVLKRMGMACGLESGSCS) are DCB2. Residues 370–410 (GMLATSSNGSQYSGSRVETPVSYVGEDDEEDDDFNENDEDD) form a disordered region. The span at 373-385 (ATSSNGSQYSGSR) shows a compositional bias: polar residues. Positions 394 to 410 (GEDDEEDDDFNENDEDD) are enriched in acidic residues.

Belongs to the E2F/DP family. In terms of assembly, component of the E2F:DP transcription factor complex. Forms heterodimers with E2F family members. The complex can interact with hypophosphorylated retinoblastoma protein RB1 and related proteins (RBL1 and RBL2) that inhibit the E2F transactivation domain. This repression involves recruitment of histone deacetylase (HDAC). During the cell cycle, from mid-to-late G1 phase, RB family members become phosphorylated, detach from the DRTF1/E2F complex to render E2F transcriptionally active. Viral oncoproteins, notably E1A, T-antigen and HPV E7, are capable of sequestering RB protein, thus releasing the active complex. Part of the E2F6.com-1 complex in G0 phase is composed of E2F6, MGA, MAX, TFDP1, CBX3, BAT8, EUHMTASE1, RING1, RNF2, MBLR, L3MBTL2 YAF2. Component of the DREAM complex (also named LINC complex) at least composed of E2F4, E2F5, LIN9, LIN37, LIN52, LIN54, MYBL1, MYBL2, RBL1, RBL2, RBBP4, TFDP1 and TFDP2. The complex exists in quiescent cells where it represses cell cycle-dependent genes. It dissociates in S phase when LIN9, LIN37, LIN52 and LIN54 form a subcomplex that binds to MYBL2. The complex TFDP1:E2F1 interacts with CEBPA; the interaction prevents CEBPA binding to target gene promoters and represses its transcriptional activity. In terms of processing, phosphorylation by E2F1-bound cyclin A-CDK2, in the S phase, inhibits E2F-mediated DNA binding and transactivation. Ubiquitinated by the BCR(KBTBD5) complex, leading to its subsequent degradation. Highest levels in muscle. Also expressed in brain, placenta, liver and kidney. Lower levels in lung and pancreas. Not detected in heart.

Its subcellular location is the nucleus. The protein resides in the cytoplasm. Can stimulate E2F-dependent transcription. Binds DNA cooperatively with E2F family members through the E2 recognition site, 5'-TTTC[CG]CGC-3', found in the promoter region of a number of genes whose products are involved in cell cycle regulation or in DNA replication. The E2F1:DP complex appears to mediate both cell proliferation and apoptosis. Blocks adipocyte differentiation by repressing CEBPA binding to its target gene promoters. This is Transcription factor Dp-1 (TFDP1) from Homo sapiens (Human).